A 233-amino-acid chain; its full sequence is Large ribosomal subunit protein uL1 (233 aa).

This sequence belongs to the universal ribosomal protein uL1 family. Part of the 50S ribosomal subunit.

Functionally, binds directly to 23S rRNA. The L1 stalk is quite mobile in the ribosome, and is involved in E site tRNA release. Protein L1 is also a translational repressor protein, it controls the translation of the L11 operon by binding to its mRNA. In Geobacillus stearothermophilus (Bacillus stearothermophilus), this protein is Large ribosomal subunit protein uL1.